The sequence spans 95 residues: Orphan antitoxin ParD2 (95 aa).

Its function is as follows. Antitoxin component of a non-functional type II toxin-antitoxin (TA system). Does not neutralize the effect of any of the RelE or ParE toxins. The chain is Orphan antitoxin ParD2 (parD2) from Caulobacter vibrioides (strain ATCC 19089 / CIP 103742 / CB 15) (Caulobacter crescentus).